The sequence spans 382 residues: 8-amino-7-oxononanoate synthase (382 aa).

Position 26 (R26) interacts with substrate. A pyridoxal 5'-phosphate-binding site is contributed by 104 to 105; that stretch reads GY. H129 is a substrate binding site. Pyridoxal 5'-phosphate is bound by residues S175, 200–203, and 232–235; these read DEAH and TLSK. K235 carries the post-translational modification N6-(pyridoxal phosphate)lysine. T345 lines the substrate pocket.

This sequence belongs to the class-II pyridoxal-phosphate-dependent aminotransferase family. BioF subfamily. In terms of assembly, homodimer. The cofactor is pyridoxal 5'-phosphate.

It carries out the reaction 6-carboxyhexanoyl-[ACP] + L-alanine + H(+) = (8S)-8-amino-7-oxononanoate + holo-[ACP] + CO2. It participates in cofactor biosynthesis; biotin biosynthesis. In terms of biological role, catalyzes the decarboxylative condensation of pimeloyl-[acyl-carrier protein] and L-alanine to produce 8-amino-7-oxononanoate (AON), [acyl-carrier protein], and carbon dioxide. In Mycobacterium sp. (strain JLS), this protein is 8-amino-7-oxononanoate synthase.